The primary structure comprises 573 residues: Poly(ribitol-phosphate) beta-N-acetylglucosaminyltransferase TarS (573 aa).

Residues Pro9, Asp41, Asn68, Arg76, 92–94 (DSD), Arg127, and Glu178 each bind UDP-N-acetyl-alpha-D-glucosamine. Residue Asp94 coordinates Mn(2+). Asp179 serves as the catalytic Proton acceptor. UDP-N-acetyl-alpha-D-glucosamine-binding positions include Arg207 and 211–213 (HMS).

It belongs to the glycosyltransferase 2 family. In terms of assembly, homotrimer. Requires Mn(2+) as cofactor.

The enzyme catalyses 4-O-[(D-ribitylphospho)(n)-di{(2R)-glycerylphospho}]-N-acetyl-beta-D-mannosaminyl-(1-&gt;4)-N-acetyl-alpha-D-glucosaminyl di-trans,octa-cis-undecaprenyl diphosphate + n UDP-N-acetyl-alpha-D-glucosamine = 4-O-([2-N-acetyl-beta-D-glucosaminyl-1-D-ribitylphospho](n)-di{[2R]-1-glycerylphospho})-N-acetyl-beta-D-mannosaminyl-(1-&gt;4)-N-acetyl-alpha-D-glucosaminyl di-trans,octa-cis-undecaprenyl diphosphate + n UDP + n H(+). It participates in cell wall biogenesis; poly(ribitol phosphate) teichoic acid biosynthesis. Functionally, attaches beta-O-GlcNAc (beta-O-N-acetyl-D-glucosamine) residues to the C4 position of poly(RboP)-wall teichoic acids (WTAs). Mediates beta-lactam resistance in methicillin resistant Staphylococcus aureus (MRSA) strains. The chain is Poly(ribitol-phosphate) beta-N-acetylglucosaminyltransferase TarS from Staphylococcus aureus (strain Mu50 / ATCC 700699).